A 143-amino-acid chain; its full sequence is Transcription antitermination protein NusB (143 aa).

It belongs to the NusB family.

Functionally, involved in transcription antitermination. Required for transcription of ribosomal RNA (rRNA) genes. Binds specifically to the boxA antiterminator sequence of the ribosomal RNA (rrn) operons. The protein is Transcription antitermination protein NusB of Anaeromyxobacter sp. (strain Fw109-5).